Reading from the N-terminus, the 338-residue chain is POU domain, class 4, transcription factor 3 (338 aa).

Residues 56–65 (RAEALAAVDI) carry the POU-IV box motif. The tract at residues 91-112 (TSPTVPISHPAALTSHPHHPVH) is disordered. One can recognise a POU-specific domain in the interval 179–256 (DVESDPRELE…VLQAWLEEAE (78 aa)). Positions 274 to 333 (RKRKRTSIAAPEKRSLEAYFAIQPRPSSEKIAAIAEKLDLKKNVVRVWFCNQRQKQKRMK) form a DNA-binding region, homeobox.

This sequence belongs to the POU transcription factor family. As to quaternary structure, interacts with ISL1. Expressed in the chochlea of the inner ear.

The protein localises to the nucleus. The protein resides in the cytoplasm. In terms of biological role, acts as a transcriptional activator. Acts by binding to sequences related to the consensus octamer motif 5'-ATGCAAAT-3' in the regulatory regions of its target genes. Involved in the auditory system development, required for terminal differentiation of hair cells in the inner ear. The polypeptide is POU domain, class 4, transcription factor 3 (Rattus norvegicus (Rat)).